The following is a 559-amino-acid chain: Coiled-coil domain-containing protein 78 (559 aa).

The segment covering 1–19 has biased composition (basic and acidic residues); that stretch reads MDSTEDRETPLKDQIRRLT. The tract at residues 1 to 20 is disordered; it reads MDSTEDRETPLKDQIRRLTN. 2 coiled-coil regions span residues 9 to 327 and 419 to 541; these read TPLK…ADYV and QSQV…AVSA.

The protein belongs to the CCDC78 family. Restricted to multiciliated cells.

Its subcellular location is the cytoplasm. The protein localises to the cytoskeleton. The protein resides in the microtubule organizing center. It is found in the centrosome. It localises to the centriole. Its function is as follows. Component of the deuterosome, a structure that promotes de novo centriole amplification in multiciliated cells that can generate more than 100 centrioles. Deuterosome-mediated centriole amplification occurs in terminally differentiated multiciliated cells (G1/0) and not in S phase. Essential for centriole amplification and is required for cep152 localization to the deuterosome. In Xenopus laevis (African clawed frog), this protein is Coiled-coil domain-containing protein 78 (ccdc78).